The primary structure comprises 172 residues: Ribosome maturation factor RimM (172 aa).

The PRC barrel domain maps to 96–168; it reads DGEFYYHEII…RIDVTVLEGL (73 aa).

Belongs to the RimM family. Binds ribosomal protein uS19.

It localises to the cytoplasm. Its function is as follows. An accessory protein needed during the final step in the assembly of 30S ribosomal subunit, possibly for assembly of the head region. Essential for efficient processing of 16S rRNA. May be needed both before and after RbfA during the maturation of 16S rRNA. It has affinity for free ribosomal 30S subunits but not for 70S ribosomes. The protein is Ribosome maturation factor RimM of Streptococcus mutans serotype c (strain ATCC 700610 / UA159).